A 451-amino-acid chain; its full sequence is MEAAAAMEAGRKLAARHPHGRSRTAHNMSSSSLRKKSDAALVRKVPVAPLRPLLANLQEVFLATKLAVLFPAVPLAIAAQCFRFDQVWVFALSLLGLIPLAERVSFLTEQIALYTGPTVGGLLNATCGNATELIIALFALLKGKIEVVKCSLLGSVLSNLLLVLGTSLFCGGVVNLGARQPYDRNQSDVSTALLFLAVLCHSAPLLLRYAVAAGEHSVSATSAAASLDLSRACSFVMLASYVAYLFFQLKTHRQLFEPQEVDGGDAGDDDEEPALGFASALFWLALMTAVISVLSEYVVGTIEPTSQSWGLSVSFISIILLPIVGNAAEHAGAIIFALKNKLDITLGVALGSATQISMFVVPLSVLVAWIMGVQMDLDFKLLETGSLFMAVLVTAFTLQDGTSHYLKGILLLLCYIVIGACFFVARQPAGHANSNGALLDVPTGSMSVQAA.

Over 1 to 58 the chain is Cytoplasmic; it reads MEAAAAMEAGRKLAARHPHGRSRTAHNMSSSSLRKKSDAALVRKVPVAPLRPLLANLQ. A disordered region spans residues 9 to 37; sequence AGRKLAARHPHGRSRTAHNMSSSSLRKKS. Over residues 13–24 the composition is skewed to basic residues; it reads LAARHPHGRSRT. The chain crosses the membrane as a helical span at residues 59–79; the sequence is EVFLATKLAVLFPAVPLAIAA. Residues 80–86 lie on the Vacuolar side of the membrane; sequence QCFRFDQ. A helical transmembrane segment spans residues 87–107; the sequence is VWVFALSLLGLIPLAERVSFL. At 108–120 the chain is on the cytoplasmic side; that stretch reads TEQIALYTGPTVG. Residues 121–141 traverse the membrane as a helical segment; the sequence is GLLNATCGNATELIIALFALL. Residues 128–163 are cation selection; sequence GNATELIIALFALLKGKIEVVKCSLLGSVLSNLLLV. The Vacuolar portion of the chain corresponds to 142–153; that stretch reads KGKIEVVKCSLL. A helical transmembrane segment spans residues 154 to 174; that stretch reads GSVLSNLLLVLGTSLFCGGVV. Over 175–191 the chain is Cytoplasmic; the sequence is NLGARQPYDRNQSDVST. The helical transmembrane segment at 192 to 212 threads the bilayer; the sequence is ALLFLAVLCHSAPLLLRYAVA. The Vacuolar portion of the chain corresponds to 213–228; sequence AGEHSVSATSAAASLD. Residues 229–249 traverse the membrane as a helical segment; the sequence is LSRACSFVMLASYVAYLFFQL. The Cytoplasmic portion of the chain corresponds to 250–273; it reads KTHRQLFEPQEVDGGDAGDDDEEP. The chain crosses the membrane as a helical span at residues 274–294; that stretch reads ALGFASALFWLALMTAVISVL. The Vacuolar portion of the chain corresponds to 295–317; it reads SEYVVGTIEPTSQSWGLSVSFIS. The helical transmembrane segment at 318–338 threads the bilayer; it reads IILLPIVGNAAEHAGAIIFAL. Positions 325 to 360 are cation selection; the sequence is GNAAEHAGAIIFALKNKLDITLGVALGSATQISMFV. At 339-352 the chain is on the cytoplasmic side; the sequence is KNKLDITLGVALGS. A helical transmembrane segment spans residues 353 to 373; sequence ATQISMFVVPLSVLVAWIMGV. At 374–378 the chain is on the vacuolar side; it reads QMDLD. Residues 379 to 399 traverse the membrane as a helical segment; the sequence is FKLLETGSLFMAVLVTAFTLQ. Over 400 to 404 the chain is Cytoplasmic; the sequence is DGTSH. A helical transmembrane segment spans residues 405 to 425; the sequence is YLKGILLLLCYIVIGACFFVA. Over 426–451 the chain is Vacuolar; it reads RQPAGHANSNGALLDVPTGSMSVQAA.

Belongs to the Ca(2+):cation antiporter (CaCA) (TC 2.A.19) family. Cation/proton exchanger (CAX) subfamily. In terms of tissue distribution, ubiquitous.

The protein resides in the vacuole membrane. Functionally, vacuolar cation/proton exchanger (CAX). Translocates Ca(2+) and other metal ions into vacuoles using the proton gradient formed by H(+)-ATPase and H(+)-pyrophosphatase. This chain is Vacuolar cation/proton exchanger 1a (CAX1a), found in Oryza sativa subsp. japonica (Rice).